The sequence spans 248 residues: DNA repair protein RecO (248 aa).

This sequence belongs to the RecO family.

Functionally, involved in DNA repair and RecF pathway recombination. This chain is DNA repair protein RecO, found in Streptomyces griseus subsp. griseus (strain JCM 4626 / CBS 651.72 / NBRC 13350 / KCC S-0626 / ISP 5235).